Reading from the N-terminus, the 569-residue chain is Proline--tRNA ligase (569 aa).

The protein belongs to the class-II aminoacyl-tRNA synthetase family. ProS type 1 subfamily. In terms of assembly, homodimer.

It localises to the cytoplasm. The catalysed reaction is tRNA(Pro) + L-proline + ATP = L-prolyl-tRNA(Pro) + AMP + diphosphate. Functionally, catalyzes the attachment of proline to tRNA(Pro) in a two-step reaction: proline is first activated by ATP to form Pro-AMP and then transferred to the acceptor end of tRNA(Pro). As ProRS can inadvertently accommodate and process non-cognate amino acids such as alanine and cysteine, to avoid such errors it has two additional distinct editing activities against alanine. One activity is designated as 'pretransfer' editing and involves the tRNA(Pro)-independent hydrolysis of activated Ala-AMP. The other activity is designated 'posttransfer' editing and involves deacylation of mischarged Ala-tRNA(Pro). The misacylated Cys-tRNA(Pro) is not edited by ProRS. This chain is Proline--tRNA ligase, found in Endomicrobium trichonymphae.